The following is a 205-amino-acid chain: GTP cyclohydrolase-2 (205 aa).

GTP is bound at residue 49–53; the sequence is RLHSE. Zn(2+) contacts are provided by cysteine 54, cysteine 65, and cysteine 67. Residues glutamine 70, 92–94, and threonine 114 each bind GTP; that span reads EGR. The active-site Proton acceptor is aspartate 126. The Nucleophile role is filled by arginine 128. Positions 149 and 154 each coordinate GTP.

The protein belongs to the GTP cyclohydrolase II family. Zn(2+) serves as cofactor.

The catalysed reaction is GTP + 4 H2O = 2,5-diamino-6-hydroxy-4-(5-phosphoribosylamino)-pyrimidine + formate + 2 phosphate + 3 H(+). It participates in cofactor biosynthesis; riboflavin biosynthesis; 5-amino-6-(D-ribitylamino)uracil from GTP: step 1/4. In terms of biological role, catalyzes the conversion of GTP to 2,5-diamino-6-ribosylamino-4(3H)-pyrimidinone 5'-phosphate (DARP), formate and pyrophosphate. This chain is GTP cyclohydrolase-2, found in Pseudomonas putida (strain W619).